Reading from the N-terminus, the 85-residue chain is Progonadoliberin-2 (85 aa).

Positions 1–23 (MCVSRLVLLFGLLLCVGAQLSNA) are cleaved as a signal peptide. At Gln24 the chain carries Pyrrolidone carboxylic acid. Gly33 carries the glycine amide modification.

It belongs to the GnRH family.

It is found in the secreted. Stimulates the secretion of gonadotropins. This Morone saxatilis (Striped bass) protein is Progonadoliberin-2 (gnrh2).